A 344-amino-acid polypeptide reads, in one-letter code: Lipase chaperone (344 aa).

Residues 13-35 (RIAPYGAAGLAAIVGVAIWSGTG) form a helical membrane-spanning segment.

This sequence belongs to the lipase chaperone family.

Its subcellular location is the cell inner membrane. Functionally, may be involved in the folding of the extracellular lipase during its passage through the periplasm. The chain is Lipase chaperone from Burkholderia vietnamiensis (strain G4 / LMG 22486) (Burkholderia cepacia (strain R1808)).